The chain runs to 355 residues: Anthocyanin synthase (355 aa).

Substrate contacts are provided by Y145 and K216. The region spanning 211 to 310 is the Fe2OG dioxygenase domain; sequence LLLQMKINYY…RISWAVFCEP (100 aa). Position 218-220 (218-220) interacts with 2-oxoglutarate; sequence NYY. Fe cation is bound at residue H235. T236 is a substrate binding site. The Fe cation site is built by D237 and H291. 2-oxoglutarate contacts are provided by residues R301 and 301-303; that span reads RIS. Substrate is bound by residues E309 and K344.

Belongs to the iron/ascorbate-dependent oxidoreductase family. It depends on L-ascorbate as a cofactor. Fe(2+) is required as a cofactor. Expressed in stems and leaves. Expressed at low levels in ovaries.

The enzyme catalyses a (2R,3S,4S)-leucoanthocyanidin + 2-oxoglutarate + O2 = a 4-H-anthocyanidin with a 3-hydroxy group + succinate + CO2 + 2 H2O. The protein operates within pigment biosynthesis; anthocyanin biosynthesis. Functionally, involved in anthocyanin biosynthesis by catalyzing the oxidation of leucoanthocyanidins into anthocyanidins. Required for the accumulation of anthocyanin in red-fleshed kiwifruit varieties. This is Anthocyanin synthase from Actinidia chinensis var. chinensis (Chinese soft-hair kiwi).